Here is a 249-residue protein sequence, read N- to C-terminus: Segregation and condensation protein A (249 aa).

The protein belongs to the ScpA family. In terms of assembly, component of a cohesin-like complex composed of ScpA, ScpB and the Smc homodimer, in which ScpA and ScpB bind to the head domain of Smc. The presence of the three proteins is required for the association of the complex with DNA.

The protein localises to the cytoplasm. In terms of biological role, participates in chromosomal partition during cell division. May act via the formation of a condensin-like complex containing Smc and ScpB that pull DNA away from mid-cell into both cell halves. This chain is Segregation and condensation protein A, found in Listeria welshimeri serovar 6b (strain ATCC 35897 / DSM 20650 / CCUG 15529 / CIP 8149 / NCTC 11857 / SLCC 5334 / V8).